The primary structure comprises 463 residues: MSSDSQVLYSQIPAIDTLLRTPACAALQAQYGSQLVTQALRSLQQQARHAIQRQQALPDWCVDWGVACTRRLAETLQPAMRRVFNLTGTVLHTNLGRALLPDTAIAAAAGAMGAPVTLEYDLDDAGRGHRDRAIADRLCALTGAEDACIVNNNAAAVLLMLATLAPGRDVIVSRGELVEIGGAFRIPDVMTQAGCRLREVGTTNRTHLHDYRQAIGEHSALLMKVHTSNYAIAGFTAAVSEAELAALGQEYGLPVISDLGSGSLLDMAHYGLPAEPMPQRMLADGVDLVSFSGDKLLGGPQAGIIVGRRELIHRLQRHPLKRALRCGKMTLAALDATLQLYQQPEKLRQALPTLRHLTREASEIAACGERLLARLRPHYEEAFVLTLEPCLSQIGSGSLPVDRLPSHAITLTPRDGRGGTLTALADRWRALPCPVIGRLQEGKLWLDLRCLDDEQALLQELCQ.

N6-(pyridoxal phosphate)lysine is present on K295.

The protein belongs to the SelA family. Homodecamer; pentamer of dimers. Binds only one seryl-tRNA(Sec) per dimer. The cofactor is pyridoxal 5'-phosphate.

Its subcellular location is the cytoplasm. It catalyses the reaction L-seryl-tRNA(Sec) + selenophosphate + H(+) = L-selenocysteinyl-tRNA(Sec) + phosphate. Its pathway is aminoacyl-tRNA biosynthesis; selenocysteinyl-tRNA(Sec) biosynthesis; selenocysteinyl-tRNA(Sec) from L-seryl-tRNA(Sec) (bacterial route): step 1/1. In terms of biological role, converts seryl-tRNA(Sec) to selenocysteinyl-tRNA(Sec) required for selenoprotein biosynthesis. The sequence is that of L-seryl-tRNA(Sec) selenium transferase from Edwardsiella ictaluri (strain 93-146).